The sequence spans 306 residues: 4-diphosphocytidyl-2-C-methyl-D-erythritol kinase (306 aa).

Residue Lys-11 is part of the active site. 113-123 lines the ATP pocket; sequence PPEGGIGGGSS. Asp-153 is a catalytic residue.

Belongs to the GHMP kinase family. IspE subfamily.

The catalysed reaction is 4-CDP-2-C-methyl-D-erythritol + ATP = 4-CDP-2-C-methyl-D-erythritol 2-phosphate + ADP + H(+). Its pathway is isoprenoid biosynthesis; isopentenyl diphosphate biosynthesis via DXP pathway; isopentenyl diphosphate from 1-deoxy-D-xylulose 5-phosphate: step 3/6. In terms of biological role, catalyzes the phosphorylation of the position 2 hydroxy group of 4-diphosphocytidyl-2C-methyl-D-erythritol. The protein is 4-diphosphocytidyl-2-C-methyl-D-erythritol kinase of Leptospira biflexa serovar Patoc (strain Patoc 1 / ATCC 23582 / Paris).